The sequence spans 371 residues: Phospho-N-acetylmuramoyl-pentapeptide-transferase (371 aa).

The next 9 membrane-spanning stretches (helical) occupy residues threonine 25–alanine 45, methionine 77–alanine 94, isoleucine 136–serine 156, leucine 172–phenylalanine 192, glycine 204–alanine 224, glycine 240–tryptophan 260, phenylalanine 269–isoleucine 289, valine 296–phenylalanine 316, and lysine 348–leucine 368.

The protein belongs to the glycosyltransferase 4 family. MraY subfamily. Mg(2+) serves as cofactor.

Its subcellular location is the cell inner membrane. It catalyses the reaction UDP-N-acetyl-alpha-D-muramoyl-L-alanyl-gamma-D-glutamyl-meso-2,6-diaminopimeloyl-D-alanyl-D-alanine + di-trans,octa-cis-undecaprenyl phosphate = di-trans,octa-cis-undecaprenyl diphospho-N-acetyl-alpha-D-muramoyl-L-alanyl-D-glutamyl-meso-2,6-diaminopimeloyl-D-alanyl-D-alanine + UMP. It functions in the pathway cell wall biogenesis; peptidoglycan biosynthesis. Catalyzes the initial step of the lipid cycle reactions in the biosynthesis of the cell wall peptidoglycan: transfers peptidoglycan precursor phospho-MurNAc-pentapeptide from UDP-MurNAc-pentapeptide onto the lipid carrier undecaprenyl phosphate, yielding undecaprenyl-pyrophosphoryl-MurNAc-pentapeptide, known as lipid I. In Opitutus terrae (strain DSM 11246 / JCM 15787 / PB90-1), this protein is Phospho-N-acetylmuramoyl-pentapeptide-transferase.